A 392-amino-acid polypeptide reads, in one-letter code: Succinate--CoA ligase [ADP-forming] subunit beta (392 aa).

The ATP-grasp domain maps to 9 to 236 (RDLFERHGLP…QAAVDPLEQA (228 aa)). Residues K45, 52 to 54 (GRG), A94, and E99 each bind ATP. The Mg(2+) site is built by N191 and D205. Substrate is bound by residues N256 and 318–320 (GIT).

This sequence belongs to the succinate/malate CoA ligase beta subunit family. As to quaternary structure, heterotetramer of two alpha and two beta subunits. Mg(2+) serves as cofactor.

It catalyses the reaction succinate + ATP + CoA = succinyl-CoA + ADP + phosphate. The catalysed reaction is GTP + succinate + CoA = succinyl-CoA + GDP + phosphate. Its pathway is carbohydrate metabolism; tricarboxylic acid cycle; succinate from succinyl-CoA (ligase route): step 1/1. Its function is as follows. Succinyl-CoA synthetase functions in the citric acid cycle (TCA), coupling the hydrolysis of succinyl-CoA to the synthesis of either ATP or GTP and thus represents the only step of substrate-level phosphorylation in the TCA. The beta subunit provides nucleotide specificity of the enzyme and binds the substrate succinate, while the binding sites for coenzyme A and phosphate are found in the alpha subunit. The sequence is that of Succinate--CoA ligase [ADP-forming] subunit beta from Salinispora arenicola (strain CNS-205).